Here is a 216-residue protein sequence, read N- to C-terminus: MRLRRKAWARPELESDPKVIYNPMHYKENWQEAFGNNHPVHLELGCGRGQFINQCAELNPHINYIAIDLYDEVLVKALRKINEKALHNVRVIPMNIAKLESIFKHDQIEKIYINFCNPWPSRRHHHKRLTHPQFLSVYKKLMKDHSEIWFKTDDDELFKDSLKYFAEAGFIEKYRTFDLHQSEFTENIKTEYEEKFSNQGVKIKFGIFVVNKGRQN.

4 residues coordinate S-adenosyl-L-methionine: Glu43, Asp68, Asn95, and Asn117. Substrate is bound by residues Asp153 and 190–193 (TEYE).

The protein belongs to the class I-like SAM-binding methyltransferase superfamily. TrmB family.

It carries out the reaction guanosine(46) in tRNA + S-adenosyl-L-methionine = N(7)-methylguanosine(46) in tRNA + S-adenosyl-L-homocysteine. Its pathway is tRNA modification; N(7)-methylguanine-tRNA biosynthesis. In terms of biological role, catalyzes the formation of N(7)-methylguanine at position 46 (m7G46) in tRNA. The sequence is that of tRNA (guanine-N(7)-)-methyltransferase from Desulfitobacterium hafniense (strain Y51).